The primary structure comprises 121 residues: Large ribosomal subunit protein bL12 (121 aa).

It belongs to the bacterial ribosomal protein bL12 family. In terms of assembly, homodimer. Part of the ribosomal stalk of the 50S ribosomal subunit. Forms a multimeric L10(L12)X complex, where L10 forms an elongated spine to which 2 to 4 L12 dimers bind in a sequential fashion. Binds GTP-bound translation factors.

Its function is as follows. Forms part of the ribosomal stalk which helps the ribosome interact with GTP-bound translation factors. Is thus essential for accurate translation. In Ureaplasma parvum serovar 3 (strain ATCC 27815 / 27 / NCTC 11736), this protein is Large ribosomal subunit protein bL12.